Reading from the N-terminus, the 333-residue chain is Mitochondrial thiamine pyrophosphate carrier 1 (333 aa).

Solcar repeat units follow at residues 12–115 (GSRL…ITQF), 129–215 (PPSV…LRPR), and 222–318 (PYSS…ALKL). 6 helical membrane-spanning segments follow: residues 17 to 35 (VTAAGATAGLISRFVIAPL), 96 to 112 (LLYVSYAAVQFTTYRSI), 135 to 155 (FIAGASAGGVATAVTYPLDLL), 190 to 209 (GLGPGLAQIIPYMGTFFCVY), 221 to 238 (LPYSSGSAVAGVLASVMA), and 293 to 310 (GLTVSLFKAAPASAVTMW).

It belongs to the mitochondrial carrier (TC 2.A.29) family.

It localises to the mitochondrion inner membrane. In terms of biological role, mitochondrial transporter that mediates uptake of thiamine pyrophosphate (ThPP) into mitochondria. This is Mitochondrial thiamine pyrophosphate carrier 1 (tpc-1) from Neurospora crassa (strain ATCC 24698 / 74-OR23-1A / CBS 708.71 / DSM 1257 / FGSC 987).